We begin with the raw amino-acid sequence, 391 residues long: Phosphoglycerate kinase (391 aa).

Residues 21-23 (DLN), arginine 36, 59-62 (HLGR), arginine 113, and arginine 146 each bind substrate. Residues lysine 197, glutamate 319, and 345–348 (GGDT) contribute to the ATP site.

It belongs to the phosphoglycerate kinase family. Monomer.

The protein resides in the cytoplasm. It catalyses the reaction (2R)-3-phosphoglycerate + ATP = (2R)-3-phospho-glyceroyl phosphate + ADP. The protein operates within carbohydrate degradation; glycolysis; pyruvate from D-glyceraldehyde 3-phosphate: step 2/5. The polypeptide is Phosphoglycerate kinase (Shewanella sp. (strain MR-4)).